A 276-amino-acid chain; its full sequence is 4-hydroxy-tetrahydrodipicolinate reductase (276 aa).

Residues 10–15 (GALGKM), aspartate 36, and 109–111 (GTT) each bind NAD(+). The active-site Proton donor/acceptor is the histidine 165. Histidine 166 provides a ligand contact to (S)-2,3,4,5-tetrahydrodipicolinate. Lysine 169 serves as the catalytic Proton donor. Residue 175-176 (GT) participates in (S)-2,3,4,5-tetrahydrodipicolinate binding.

The protein belongs to the DapB family.

The protein resides in the cytoplasm. It carries out the reaction (S)-2,3,4,5-tetrahydrodipicolinate + NAD(+) + H2O = (2S,4S)-4-hydroxy-2,3,4,5-tetrahydrodipicolinate + NADH + H(+). It catalyses the reaction (S)-2,3,4,5-tetrahydrodipicolinate + NADP(+) + H2O = (2S,4S)-4-hydroxy-2,3,4,5-tetrahydrodipicolinate + NADPH + H(+). It functions in the pathway amino-acid biosynthesis; L-lysine biosynthesis via DAP pathway; (S)-tetrahydrodipicolinate from L-aspartate: step 4/4. Its function is as follows. Catalyzes the conversion of 4-hydroxy-tetrahydrodipicolinate (HTPA) to tetrahydrodipicolinate. The protein is 4-hydroxy-tetrahydrodipicolinate reductase of Prochlorococcus marinus (strain SARG / CCMP1375 / SS120).